Reading from the N-terminus, the 414-residue chain is Serine/threonine transporter SstT (414 aa).

Helical transmembrane passes span 16–36, 46–66, 84–104, 143–163, 180–200, 219–239, 300–320, and 332–352; these read GSLV…AWIS, LGTL…LMLV, ILFL…VFSF, ALLN…GFAL, AVTF…FGLV, LVVL…LLVF, MAGA…TLGV, and VVAS…LLLI.

It belongs to the dicarboxylate/amino acid:cation symporter (DAACS) (TC 2.A.23) family.

The protein localises to the cell inner membrane. The enzyme catalyses L-serine(in) + Na(+)(in) = L-serine(out) + Na(+)(out). It catalyses the reaction L-threonine(in) + Na(+)(in) = L-threonine(out) + Na(+)(out). Functionally, involved in the import of serine and threonine into the cell, with the concomitant import of sodium (symport system). This chain is Serine/threonine transporter SstT, found in Salmonella heidelberg (strain SL476).